A 456-amino-acid polypeptide reads, in one-letter code: Iroquois-class homeodomain protein irx-2 (456 aa).

Positions Asp-110–Asn-172 form a DNA-binding region, homeobox; TALE-type. 3 disordered regions span residues Asn-172–Glu-214, Cys-246–Lys-320, and Arg-434–Pro-456. 2 stretches are compositionally biased toward basic and acidic residues: residues Gly-192–Asp-205 and Cys-246–Tyr-256. Residues Asp-257–Asp-269 are compositionally biased toward acidic residues. Over residues Asn-291–Ala-318 the composition is skewed to polar residues.

Belongs to the TALE/IRO homeobox family. In terms of tissue distribution, expressed in the neural plate in overlapping patterns with other irx members, which all share an anterior border of expression. Also expressed in the placodes. Broadly expressed in the tailbud rhombencephalon (hindbrain). Outside the nervous system and at tailbud stages, expressed in the developing otic vesicle, branchial arches, prospective heart region and pronephros.

The protein resides in the nucleus. Functionally, acts partially redundantly with other irx members in neural patterning. Required for formation of the posterior forebrain, midbrain, hindbrain, and to a lesser extent, spinal cord. Acts early in neural plate development to induce expression of some but not all proneural genes, and specify a neural precursor state. Also up-regulates repressors that prevent neuronal differentiation. Patterns the neuroectoderm in both the anterior/posterior and dorsal/ventral axes. Probably dispensable for pronephric kidney development. This chain is Iroquois-class homeodomain protein irx-2, found in Xenopus tropicalis (Western clawed frog).